A 565-amino-acid chain; its full sequence is Nephronectin (565 aa).

Positions 1–19 (MDFLLALVLVSSLYLQAAA) are cleaved as a signal peptide. The EGF-like 1 domain maps to 52–87 (SWGQCQPVCQPRCKHGECIGPNKCKCHPGYAGKTCN). Disulfide bonds link cysteine 56-cysteine 69, cysteine 60-cysteine 75, cysteine 77-cysteine 86, cysteine 93-cysteine 104, cysteine 100-cysteine 113, and cysteine 115-cysteine 127. In terms of domain architecture, EGF-like 2; calcium-binding spans 89-128 (DLNECGLKPRPCKHRCMNTYGSYKCYCLNGYMLMPDGSCS). The region spanning 132-168 (TCSMANCQYGCDVVKGQIRCQCPSPGLQLAPDGRTCV) is the EGF-like 3 domain. The EGF-like 4; calcium-binding domain maps to 169 to 213 (DVDECATGRASCPRFRQCVNTFGSYICKCHKGFNLMYIGGKYQCH). 6 disulfide bridges follow: cysteine 173–cysteine 186, cysteine 180–cysteine 195, cysteine 197–cysteine 212, cysteine 218–cysteine 231, cysteine 225–cysteine 240, and cysteine 242–cysteine 253. In terms of domain architecture, EGF-like 5; calcium-binding spans 214-254 (DIDECSLGQYQCSSFARCYNIHGSYKCKCKEGYQGDGLTCV). Residues 301 to 373 (YIPPIITNRP…PPGGITVDNR (73 aa)) form a disordered region. Residues 304–316 (PIITNRPTSKPTT) are compositionally biased toward low complexity. Pro residues predominate over residues 317 to 349 (RPTPKPTPIPTPPPPPPLPTELRTPLPPTTPER). The short motif at 382–384 (RGD) is the Integrin interaction element. Residues 420 to 563 (HSCNFDHGLC…VSLKKGHCSE (144 aa)) form the MAM domain.

Belongs to the nephronectin family. As to quaternary structure, homodimer and homotrimer.

The protein localises to the secreted. The protein resides in the extracellular space. It localises to the extracellular matrix. Functional ligand of integrin alpha-8/beta-1 in kidney development. Regulates the expression of GDNF with integrin alpha-8/beta-1 which is essential for kidney development. May also play a role in the development and function of various tissues, regulating cell adhesion, spreading and survival through the binding of several integrins. The polypeptide is Nephronectin (NPNT) (Pongo abelii (Sumatran orangutan)).